We begin with the raw amino-acid sequence, 329 residues long: uncharacterized protein (329 aa).

Positions 56 to 247 (LNKEEQFQED…EAEKTHQAKL (192 aa)) form a coiled coil.

This is an uncharacterized protein from Bos taurus (Bovine).